We begin with the raw amino-acid sequence, 253 residues long: 1-(5-phosphoribosyl)-5-[(5-phosphoribosylamino)methylideneamino] imidazole-4-carboxamide isomerase (253 aa).

Aspartate 19 (proton acceptor) is an active-site residue. Aspartate 141 functions as the Proton donor in the catalytic mechanism.

It belongs to the HisA/HisF family.

Its subcellular location is the cytoplasm. It carries out the reaction 1-(5-phospho-beta-D-ribosyl)-5-[(5-phospho-beta-D-ribosylamino)methylideneamino]imidazole-4-carboxamide = 5-[(5-phospho-1-deoxy-D-ribulos-1-ylimino)methylamino]-1-(5-phospho-beta-D-ribosyl)imidazole-4-carboxamide. It participates in amino-acid biosynthesis; L-histidine biosynthesis; L-histidine from 5-phospho-alpha-D-ribose 1-diphosphate: step 4/9. The polypeptide is 1-(5-phosphoribosyl)-5-[(5-phosphoribosylamino)methylideneamino] imidazole-4-carboxamide isomerase (Rhodopirellula baltica (strain DSM 10527 / NCIMB 13988 / SH1)).